The sequence spans 180 residues: Inner membrane-spanning protein YciB (180 aa).

Transmembrane regions (helical) follow at residues 22–42, 50–70, 72–92, 121–141, and 149–169; these read IFVASGALIVATLVALAFTWL, MTLVTAAMVLVFGTLTLAFHS, LFIKWKVTVLYVLFALALLVS, LSWAIFFLVCGLLNIYVAFWL, and FKVFGLTALTLIFTLISGVYI.

The protein belongs to the YciB family.

The protein localises to the cell inner membrane. In terms of biological role, plays a role in cell envelope biogenesis, maintenance of cell envelope integrity and membrane homeostasis. The protein is Inner membrane-spanning protein YciB of Yersinia pseudotuberculosis serotype O:1b (strain IP 31758).